Consider the following 179-residue polypeptide: NADH dehydrogenase [ubiquinone] 1 beta subcomplex subunit 9 (179 aa).

The residue at position 2 (Ala-2) is an N-acetylalanine. Ser-85 is modified (phosphoserine).

This sequence belongs to the complex I LYR family. Mammalian complex I is composed of 45 different subunits.

The protein resides in the mitochondrion inner membrane. Its function is as follows. Accessory subunit of the mitochondrial membrane respiratory chain NADH dehydrogenase (Complex I), that is believed to be not involved in catalysis. Complex I functions in the transfer of electrons from NADH to the respiratory chain. The immediate electron acceptor for the enzyme is believed to be ubiquinone. In Mus musculus (Mouse), this protein is NADH dehydrogenase [ubiquinone] 1 beta subcomplex subunit 9 (Ndufb9).